Here is a 402-residue protein sequence, read N- to C-terminus: NADH-quinone oxidoreductase subunit D 2 (402 aa).

Belongs to the complex I 49 kDa subunit family. NDH-1 is composed of 14 different subunits. Subunits NuoB, C, D, E, F, and G constitute the peripheral sector of the complex.

Its subcellular location is the cell inner membrane. It carries out the reaction a quinone + NADH + 5 H(+)(in) = a quinol + NAD(+) + 4 H(+)(out). In terms of biological role, NDH-1 shuttles electrons from NADH, via FMN and iron-sulfur (Fe-S) centers, to quinones in the respiratory chain. The immediate electron acceptor for the enzyme in this species is believed to be ubiquinone. Couples the redox reaction to proton translocation (for every two electrons transferred, four hydrogen ions are translocated across the cytoplasmic membrane), and thus conserves the redox energy in a proton gradient. In Nitrobacter hamburgensis (strain DSM 10229 / NCIMB 13809 / X14), this protein is NADH-quinone oxidoreductase subunit D 2.